We begin with the raw amino-acid sequence, 472 residues long: Glutamate--tRNA ligase (472 aa).

A 'HIGH' region motif is present at residues 9–19 (PSPTGYLHVGG). 4 residues coordinate Zn(2+): cysteine 98, cysteine 100, cysteine 125, and histidine 127. Positions 237–241 (KLSKR) match the 'KMSKS' region motif. Lysine 240 provides a ligand contact to ATP.

Belongs to the class-I aminoacyl-tRNA synthetase family. Glutamate--tRNA ligase type 1 subfamily. Monomer. It depends on Zn(2+) as a cofactor.

The protein resides in the cytoplasm. It catalyses the reaction tRNA(Glu) + L-glutamate + ATP = L-glutamyl-tRNA(Glu) + AMP + diphosphate. Its function is as follows. Catalyzes the attachment of glutamate to tRNA(Glu) in a two-step reaction: glutamate is first activated by ATP to form Glu-AMP and then transferred to the acceptor end of tRNA(Glu). In Klebsiella pneumoniae subsp. pneumoniae (strain ATCC 700721 / MGH 78578), this protein is Glutamate--tRNA ligase.